A 211-amino-acid chain; its full sequence is Protein GrpE (211 aa).

The segment covering 1-13 (MVDKDEEQIKQNV) has biased composition (basic and acidic residues). Residues 1 to 38 (MVDKDEEQIKQNVEEDLSSTVEQTGEENIEFPSAPNHP) form a disordered region.

Belongs to the GrpE family. As to quaternary structure, homodimer.

The protein resides in the cytoplasm. In terms of biological role, participates actively in the response to hyperosmotic and heat shock by preventing the aggregation of stress-denatured proteins, in association with DnaK and GrpE. It is the nucleotide exchange factor for DnaK and may function as a thermosensor. Unfolded proteins bind initially to DnaJ; upon interaction with the DnaJ-bound protein, DnaK hydrolyzes its bound ATP, resulting in the formation of a stable complex. GrpE releases ADP from DnaK; ATP binding to DnaK triggers the release of the substrate protein, thus completing the reaction cycle. Several rounds of ATP-dependent interactions between DnaJ, DnaK and GrpE are required for fully efficient folding. This is Protein GrpE from Protochlamydia amoebophila (strain UWE25).